A 193-amino-acid polypeptide reads, in one-letter code: Orotate phosphoribosyltransferase (193 aa).

A 5-phospho-alpha-D-ribose 1-diphosphate-binding site is contributed by 117 to 125 (EDVVTTGLS). Residues threonine 121 and arginine 149 each coordinate orotate.

The protein belongs to the purine/pyrimidine phosphoribosyltransferase family. PyrE subfamily. Homodimer. Requires Mg(2+) as cofactor.

The catalysed reaction is orotidine 5'-phosphate + diphosphate = orotate + 5-phospho-alpha-D-ribose 1-diphosphate. It functions in the pathway pyrimidine metabolism; UMP biosynthesis via de novo pathway; UMP from orotate: step 1/2. In terms of biological role, catalyzes the transfer of a ribosyl phosphate group from 5-phosphoribose 1-diphosphate to orotate, leading to the formation of orotidine monophosphate (OMP). The sequence is that of Orotate phosphoribosyltransferase from Erythrobacter litoralis (strain HTCC2594).